The following is a 54-amino-acid chain: UPF0391 membrane protein Sde_0270 (54 aa).

2 helical membrane passes run 6 to 26 and 29 to 49; these read IVFL…IAGV and GIAK…LVIG.

It belongs to the UPF0391 family.

It is found in the cell membrane. The chain is UPF0391 membrane protein Sde_0270 from Saccharophagus degradans (strain 2-40 / ATCC 43961 / DSM 17024).